Consider the following 342-residue polypeptide: Probable endoglucanase (342 aa).

The first 20 residues, methionine 1 to alanine 20, serve as a signal peptide directing secretion. Glutamate 57 (proton donor) is an active-site residue. Catalysis depends on aspartate 114, which acts as the Nucleophile.

This sequence belongs to the glycosyl hydrolase 8 (cellulase D) family.

It is found in the secreted. It catalyses the reaction Endohydrolysis of (1-&gt;4)-beta-D-glucosidic linkages in cellulose, lichenin and cereal beta-D-glucans.. Enzyme capable of hydrolyzing carboxy-methyl-cellulose (CMC). The polypeptide is Probable endoglucanase (cmcAX) (Novacetimonas hansenii (Komagataeibacter hansenii)).